Here is a 269-residue protein sequence, read N- to C-terminus: NAD-capped RNA hydrolase NudC (269 aa).

Arg-81 lines the substrate pocket. 4 residues coordinate Zn(2+): Cys-110, Cys-113, Cys-128, and Cys-131. Tyr-136 is a substrate binding site. One can recognise a Nudix hydrolase domain in the interval 137–260 (PRIFPCIIVA…TIARALIEQT (124 aa)). A divalent metal cation-binding residues include Ala-170, Glu-186, and Glu-190. Positions 171 to 192 (GFVEVGETLEQCVAREVLEETG) match the Nudix box motif. A substrate-binding site is contributed by 204-211 (QPWAFPSS). A divalent metal cation is bound at residue Glu-231. Ala-253 is a substrate binding site.

This sequence belongs to the Nudix hydrolase family. NudC subfamily. Homodimer. Mg(2+) serves as cofactor. Requires Mn(2+) as cofactor. It depends on Zn(2+) as a cofactor.

It catalyses the reaction a 5'-end NAD(+)-phospho-ribonucleoside in mRNA + H2O = a 5'-end phospho-adenosine-phospho-ribonucleoside in mRNA + beta-nicotinamide D-ribonucleotide + 2 H(+). The enzyme catalyses NAD(+) + H2O = beta-nicotinamide D-ribonucleotide + AMP + 2 H(+). It carries out the reaction NADH + H2O = reduced beta-nicotinamide D-ribonucleotide + AMP + 2 H(+). In terms of biological role, mRNA decapping enzyme that specifically removes the nicotinamide adenine dinucleotide (NAD) cap from a subset of mRNAs by hydrolyzing the diphosphate linkage to produce nicotinamide mononucleotide (NMN) and 5' monophosphate mRNA. The NAD-cap is present at the 5'-end of some mRNAs and stabilizes RNA against 5'-processing. Has preference for mRNAs with a 5'-end purine. Catalyzes the hydrolysis of a broad range of dinucleotide pyrophosphates. In Vibrio cholerae serotype O1 (strain ATCC 39315 / El Tor Inaba N16961), this protein is NAD-capped RNA hydrolase NudC.